Consider the following 537-residue polypeptide: MANGIKKVEHLYRSKLPDIEISDHLPLHSYCFERVAEFADRPCLIDGATDRTYCFSEVELISRKVAAGLAKLGLQQGQVVMLLLPNCIEFAFVFMGASVRGAIVTTANPFYKPGEIAKQAKAAGARIIVTLAAYVEKLADLQSHDVLVITIDDAPKEGCQHISVLTEADETQCPAVKIHPDDVVALPYSSGTTGLPKGVMLTHKGLVSSVAQQVDGENPNLYFHSDDVILCVLPLFHIYSLNSVLLCALRAGAATLIMQKFNLTTCLELIQKYKVTVAPIVPPIVLDITKSPIVSQYDVSSVRIIMSGAAPLGKELEDALRERFPKAIFGQGYGMTEAGPVLAMNLAFAKNPFPVKSGSCGTVVRNAQIKILDTETGESLPHNQAGEICIRGPEIMKGYINDPESTAATIDEEGWLHTGDVEYIDDDEEIFIVDRVKEIIKYKGFQVAPAELEALLVAHPSIADAAVVPQKHEEAGEVPVAFVVKSSEISEQEIKEFVAKQVIFYKKIHRVYFVDAIPKSPSGKILRKDLRSRLAAK.

Serine 189, serine 190, glycine 191, threonine 192, threonine 193, and lysine 197 together coordinate ATP. Positions 239 and 243 each coordinate (E)-4-coumaroyl-AMP. Lysine 260 is a binding site for CoA. The interval 262-331 is SBD1; that stretch reads NLTTCLELIQ…ERFPKAIFGQ (70 aa). 5 residues coordinate (E)-4-coumaroyl-AMP: alanine 309, glutamine 331, glycine 332, threonine 336, and methionine 344. ATP is bound by residues glutamine 331, glycine 332, and threonine 336. Residues 332 to 399 are SBD2; that stretch reads GYGMTEAGPV…IRGPEIMKGY (68 aa). ATP is bound by residues aspartate 420 and arginine 435. Residues lysine 437 and lysine 441 each coordinate (E)-4-coumaroyl-AMP. CoA-binding residues include lysine 443 and glycine 444. An ATP-binding site is contributed by lysine 524.

Belongs to the ATP-dependent AMP-binding enzyme family. It depends on Mg(2+) as a cofactor.

The enzyme catalyses (E)-4-coumarate + ATP + CoA = (E)-4-coumaroyl-CoA + AMP + diphosphate. It carries out the reaction (E)-4-coumarate + ATP + H(+) = (E)-4-coumaroyl-AMP + diphosphate. It catalyses the reaction (E)-4-coumaroyl-AMP + CoA = (E)-4-coumaroyl-CoA + AMP + H(+). The protein operates within phytoalexin biosynthesis; 3,4',5-trihydroxystilbene biosynthesis; 3,4',5-trihydroxystilbene from trans-4-coumarate: step 1/2. Its function is as follows. Carboxylate--CoA ligase that may use 4-coumarate as substrate. Follows a two-step reaction mechanism, wherein the carboxylate substrate first undergoes adenylation by ATP, followed by a thioesterification in the presence of CoA to yield the final CoA thioester. This chain is 4-coumarate--CoA ligase (4CL), found in Pinus taeda (Loblolly pine).